The following is a 295-amino-acid chain: Xyloglucan endotransglucosylase/hydrolase (295 aa).

The first 23 residues, 1 to 23, serve as a signal peptide directing secretion; sequence MAVSSTPWALVALFLMASSTVMA. In terms of domain architecture, GH16 spans 25-222; that stretch reads PPRKAIDVPF…WANAPFIASY (198 aa). Glutamate 108 (nucleophile) is an active-site residue. Glutamate 112 functions as the Proton donor in the catalytic mechanism. A xyloglucan-binding site is contributed by glutamate 112. A glycan (N-linked (GlcNAc...) asparagine) is linked at asparagine 116. Residues 125–127, 135–137, 201–202, and glycine 206 each bind xyloglucan; these read QTN, NRE, and DW. Intrachain disulfides connect cysteine 230–cysteine 239 and cysteine 276–cysteine 289. Residue arginine 281 coordinates xyloglucan.

The protein belongs to the glycosyl hydrolase 16 family. XTH group 1 subfamily. Contains at least one intrachain disulfide bond essential for its enzymatic activity. Post-translationally, the N-glycan consists of an (GlcNAc)2(Hex)6 oligosaccharide; not essential for its enzymatic activity.

It localises to the secreted. The protein localises to the cell wall. Its subcellular location is the extracellular space. The protein resides in the apoplast. It catalyses the reaction breaks a beta-(1-&gt;4) bond in the backbone of a xyloglucan and transfers the xyloglucanyl segment on to O-4 of the non-reducing terminal glucose residue of an acceptor, which can be a xyloglucan or an oligosaccharide of xyloglucan.. Functionally, catalyzes xyloglucan endohydrolysis (XEH) and/or endotransglycosylation (XET). Cleaves and religates xyloglucan polymers, an essential constituent of the primary cell wall, and thereby participates in cell wall construction of growing tissues. This is Xyloglucan endotransglucosylase/hydrolase (XET16A) from Brassica oleracea var. botrytis (Cauliflower).